A 336-amino-acid polypeptide reads, in one-letter code: Putative ALA-interacting subunit 4 (336 aa).

The chain crosses the membrane as a helical span at residues 36 to 56; that stretch reads VILTFLVSGVVFIPLGVICLF. N-linked (GlcNAc...) asparagine glycosylation is present at N94. Over residues 127 to 142 the composition is skewed to basic and acidic residues; the sequence is RQDGQLRSPKDEHETK. Residues 127–148 are disordered; sequence RQDGQLRSPKDEHETKSCAPED. N167 carries N-linked (GlcNAc...) asparagine glycosylation. The helical transmembrane segment at 290–310 threads the bilayer; it reads FLGIAYLTVGSICLFLAVSFS. N-linked (GlcNAc...) asparagine glycosylation is present at N329.

The protein belongs to the CDC50/LEM3 family. In terms of tissue distribution, expressed in flowers. May be restricted to pollen grains.

Its subcellular location is the membrane. The protein is Putative ALA-interacting subunit 4 (ALIS4) of Arabidopsis thaliana (Mouse-ear cress).